A 188-amino-acid polypeptide reads, in one-letter code: Pyridoxal 5'-phosphate synthase subunit PdxT (188 aa).

Residue 47–49 (GES) coordinates L-glutamine. The Nucleophile role is filled by C79. Residues R105 and 134-135 (IR) contribute to the L-glutamine site. Active-site charge relay system residues include H170 and E172.

It belongs to the glutaminase PdxT/SNO family. In terms of assembly, in the presence of PdxS, forms a dodecamer of heterodimers. Only shows activity in the heterodimer.

The enzyme catalyses aldehydo-D-ribose 5-phosphate + D-glyceraldehyde 3-phosphate + L-glutamine = pyridoxal 5'-phosphate + L-glutamate + phosphate + 3 H2O + H(+). It carries out the reaction L-glutamine + H2O = L-glutamate + NH4(+). It participates in cofactor biosynthesis; pyridoxal 5'-phosphate biosynthesis. Its function is as follows. Catalyzes the hydrolysis of glutamine to glutamate and ammonia as part of the biosynthesis of pyridoxal 5'-phosphate. The resulting ammonia molecule is channeled to the active site of PdxS. This Listeria monocytogenes serotype 4b (strain F2365) protein is Pyridoxal 5'-phosphate synthase subunit PdxT.